The following is a 184-amino-acid chain: UPF0669 protein C6orf120 homolog (184 aa).

Positions 1 to 23 are cleaved as a signal peptide; sequence MAAPWTGALLLLLASQAVSSAQA. Asn-47 is a glycosylation site (N-linked (GlcNAc...) asparagine).

It belongs to the UPF0669 family.

It is found in the secreted. Its function is as follows. May be involved in induction of apoptosis in CD4(+) T-cells, but not CD8(+) T-cells or hepatocytes. The protein is UPF0669 protein C6orf120 homolog of Bos taurus (Bovine).